The chain runs to 425 residues: uncharacterized protein (425 aa).

Residues 135–202 (KEQEILGCSH…AAQYCKYCKN (68 aa)) form a CHY-type zinc finger. 24 residues coordinate Zn(2+): C142, H144, C153, C156, C162, C165, H166, H172, C184, C187, C197, C200, C209, C212, H225, C226, C229, C232, H244, C245, C248, C251, H260, and C262. A CTCHY-type zinc finger spans residues 204–270 (MGRYYCNKCK…RCIERSTDCN (67 aa)). An RING-type; atypical zinc finger spans residues 271–313 (CPICGEYMFNSRERVIFLSCSHPLHQRCHEEYIRTNYRCPTCY).

This is an uncharacterized protein from Schizosaccharomyces pombe (strain 972 / ATCC 24843) (Fission yeast).